A 908-amino-acid polypeptide reads, in one-letter code: 5'-3' exoribonuclease 2 homolog (908 aa).

Residues 263 to 280 (RPCDICNGFGHEMDKCVG) form a CCHC-type zinc finger. 2 disordered regions span residues 409-457 (RQRR…VGNY) and 821-908 (GGNQ…YRRF). Residues 432–454 (HGSLNQSAFGASAVGPNSQQRSV) are compositionally biased toward polar residues. Residue serine 438 is modified to Phosphoserine. Low complexity-rich tracts occupy residues 825 to 868 (GQSY…HNQR) and 878 to 908 (QRNF…YRRF).

Belongs to the 5'-3' exonuclease family. XRN2/RAT1 subfamily. Interacts with cuff and Rai1; the interaction with cuff may inhibit its role in RNA degradation.

The protein localises to the nucleus. A 5'-3' exoribonuclease. May promote the termination of transcription by RNA polymerase II and promote RNA degradation. Involved in turnover of piRNA precursors. This is 5'-3' exoribonuclease 2 homolog from Drosophila melanogaster (Fruit fly).